The chain runs to 215 residues: Chaperone protein TorD (215 aa).

Belongs to the TorD/DmsD family. TorD subfamily.

It localises to the cytoplasm. In terms of biological role, involved in the biogenesis of TorA. Acts on TorA before the insertion of the molybdenum cofactor and, as a result, probably favors a conformation of the apoenzyme that is competent for acquiring the cofactor. The chain is Chaperone protein TorD from Aliivibrio fischeri (strain ATCC 700601 / ES114) (Vibrio fischeri).